The primary structure comprises 448 residues: tRNA modification GTPase MnmE (448 aa).

3 residues coordinate (6S)-5-formyl-5,6,7,8-tetrahydrofolate: Arg22, Glu79, and Lys118. The 158-residue stretch at Gly214–Gly371 folds into the TrmE-type G domain. Asn224 serves as a coordination point for K(+). GTP is bound by residues Asn224 to Ser229, Thr243 to Thr249, and Asp268 to Gly271. Ser228 contacts Mg(2+). Residues Thr243, Ile245, and Thr248 each coordinate K(+). Residue Thr249 participates in Mg(2+) binding. A (6S)-5-formyl-5,6,7,8-tetrahydrofolate-binding site is contributed by Lys448.

The protein belongs to the TRAFAC class TrmE-Era-EngA-EngB-Septin-like GTPase superfamily. TrmE GTPase family. Homodimer. Heterotetramer of two MnmE and two MnmG subunits. K(+) serves as cofactor.

Its subcellular location is the cytoplasm. Its function is as follows. Exhibits a very high intrinsic GTPase hydrolysis rate. Involved in the addition of a carboxymethylaminomethyl (cmnm) group at the wobble position (U34) of certain tRNAs, forming tRNA-cmnm(5)s(2)U34. This Dechloromonas aromatica (strain RCB) protein is tRNA modification GTPase MnmE.